A 951-amino-acid chain; its full sequence is Bifunctional glutamine synthetase adenylyltransferase/adenylyl-removing enzyme (951 aa).

Residues 1–440 form an adenylyl removase region; that stretch reads MLPLPSELQI…VFDDLIGDET (440 aa). The tract at residues 449 to 951 is adenylyl transferase; that stretch reads HGLYKSLWQD…WLAANDANVS (503 aa).

This sequence belongs to the GlnE family. Mg(2+) is required as a cofactor.

It catalyses the reaction [glutamine synthetase]-O(4)-(5'-adenylyl)-L-tyrosine + phosphate = [glutamine synthetase]-L-tyrosine + ADP. The catalysed reaction is [glutamine synthetase]-L-tyrosine + ATP = [glutamine synthetase]-O(4)-(5'-adenylyl)-L-tyrosine + diphosphate. Functionally, involved in the regulation of glutamine synthetase GlnA, a key enzyme in the process to assimilate ammonia. When cellular nitrogen levels are high, the C-terminal adenylyl transferase (AT) inactivates GlnA by covalent transfer of an adenylyl group from ATP to specific tyrosine residue of GlnA, thus reducing its activity. Conversely, when nitrogen levels are low, the N-terminal adenylyl removase (AR) activates GlnA by removing the adenylyl group by phosphorolysis, increasing its activity. The regulatory region of GlnE binds the signal transduction protein PII (GlnB) which indicates the nitrogen status of the cell. In Yersinia pseudotuberculosis serotype O:1b (strain IP 31758), this protein is Bifunctional glutamine synthetase adenylyltransferase/adenylyl-removing enzyme.